The sequence spans 737 residues: Autolysin (737 aa).

Residues 1–13 (MKKESMSRIERRK) are compositionally biased toward basic and acidic residues. Disordered stretches follow at residues 1 to 28 (MKKE…KKST), 51 to 132 (AEAT…TDSS), and 335 to 360 (PSSG…SGTN). An N-terminal signal peptide occupies residues 1 to 53 (MKKESMSRIERRKAQQRKKTPVQWKKSTTLFSSALIVSSVGTPVALLPVTAEA). Residues 67-117 (PTTETGLVETPTTETTPGTTEQPTTDSSTTTESTTESSKETPTTPSTEQPT) show a composition bias toward low complexity. A compositionally biased stretch (polar residues) spans 118-132 (ADSTTPVESGTTDSS). A compositionally biased stretch (gly residues) spans 339-352 (GNTGGGTVNPGTGG). The LysM 1 domain occupies 361-404 (TYYTVKSGDTLNKIAAQYGVSVANLRSWNGISGDLIFVGQKLIV). Residues 409 to 429 (SGNTGGSGSGGSNNNQSGTNT) form a disordered region. The span at 410–419 (GNTGGSGSGG) shows a compositional bias: gly residues. A compositionally biased stretch (low complexity) spans 420-429 (SNNNQSGTNT). LysM domains follow at residues 429-472 (TYYT…KLIV), 497-540 (TYYT…KIIV), 565-608 (TYYT…KIIV), 631-674 (TSYT…TIIV), and 693-736 (KRHT…TLKV).

Belongs to the glycosyl hydrolase 73 family.

It localises to the secreted. Its function is as follows. Hydrolyzes the cell wall of E.faecalis and M.lysodeikticus. May play an important role in cell wall growth and cell separation. The sequence is that of Autolysin from Enterococcus faecalis (strain ATCC 700802 / V583).